A 441-amino-acid polypeptide reads, in one-letter code: Mitochondrial distribution and morphology protein 12 (441 aa).

The 441-residue stretch at 1–441 (MSIDIDWERA…VYPSFWTFLV (441 aa)) folds into the SMP-LTD domain. 2 disordered regions span residues 70–89 (YEDGDEDLSVSSEEQSPMRE) and 180–289 (TPLR…RMRE). Polar residues-rich tracts occupy residues 226 to 245 (SRPSTVNTGNTLFSRGSVST) and 253 to 263 (SSQTVLANNPG).

This sequence belongs to the MDM12 family. As to quaternary structure, component of the ER-mitochondria encounter structure (ERMES) or MDM complex, composed of MMM1, MDM10, MDM12 and MDM34. An MMM1 homodimer associates with one molecule of MDM12 on each side in a pairwise head-to-tail manner, and the SMP-LTD domains of MMM1 and MDM12 generate a continuous hydrophobic tunnel for phospholipid trafficking.

Its subcellular location is the mitochondrion outer membrane. It is found in the endoplasmic reticulum membrane. In terms of biological role, component of the ERMES/MDM complex, which serves as a molecular tether to connect the endoplasmic reticulum (ER) and mitochondria. Components of this complex are involved in the control of mitochondrial shape and protein biogenesis, and function in nonvesicular lipid trafficking between the ER and mitochondria. MDM12 is required for the interaction of the ER-resident membrane protein MMM1 and the outer mitochondrial membrane-resident beta-barrel protein MDM10. The MDM12-MMM1 subcomplex functions in the major beta-barrel assembly pathway that is responsible for biogenesis of all mitochondrial outer membrane beta-barrel proteins, and acts in a late step after the SAM complex. The MDM10-MDM12-MMM1 subcomplex further acts in the TOM40-specific pathway after the action of the MDM12-MMM1 complex. Essential for establishing and maintaining the structure of mitochondria and maintenance of mtDNA nucleoids. In Paracoccidioides brasiliensis (strain Pb03), this protein is Mitochondrial distribution and morphology protein 12.